An 832-amino-acid polypeptide reads, in one-letter code: Protein P (832 aa).

The segment at 1–177 (MPLSYQHFRR…FCGSPYSWEQ (177 aa)) is terminal protein domain (TP). The interval 178–335 (ELQHGAESFH…YCLSHIVNLL (158 aa)) is spacer. Residues 186–229 (FHQQSSGILSRPPVGSSLQSKHSKSRLGLQSQQGHLARRQQGRS) form a disordered region. A polymerase/reverse transcriptase domain (RT) region spans residues 336–679 (EDWGPCAEHG…YLNLYPVARQ (344 aa)). The Reverse transcriptase domain maps to 346-589 (EHHIRTPRTP…YSLNFMGYVI (244 aa)). Mg(2+) is bound by residues D418, D540, and D541.

It belongs to the hepadnaviridae P protein family.

It carries out the reaction DNA(n) + a 2'-deoxyribonucleoside 5'-triphosphate = DNA(n+1) + diphosphate. It catalyses the reaction Endonucleolytic cleavage to 5'-phosphomonoester.. Its activity is regulated as follows. Activated by host HSP70 and HSP40 in vitro to be able to bind the epsilon loop of the pgRNA. Because deletion of the RNase H region renders the protein partly chaperone-independent, the chaperones may be needed indirectly to relieve occlusion of the RNA-binding site by this domain. Inhibited by several reverse-transcriptase inhibitors: Lamivudine, Adefovir and Entecavir. Functionally, multifunctional enzyme that converts the viral RNA genome into dsDNA in viral cytoplasmic capsids. This enzyme displays a DNA polymerase activity that can copy either DNA or RNA templates, and a ribonuclease H (RNase H) activity that cleaves the RNA strand of RNA-DNA heteroduplexes in a partially processive 3'- to 5'-endonucleasic mode. Neo-synthesized pregenomic RNA (pgRNA) are encapsidated together with the P protein, and reverse-transcribed inside the nucleocapsid. Initiation of reverse-transcription occurs first by binding the epsilon loop on the pgRNA genome, and is initiated by protein priming, thereby the 5'-end of (-)DNA is covalently linked to P protein. Partial (+)DNA is synthesized from the (-)DNA template and generates the relaxed circular DNA (RC-DNA) genome. After budding and infection, the RC-DNA migrates in the nucleus, and is converted into a plasmid-like covalently closed circular DNA (cccDNA). The activity of P protein does not seem to be necessary for cccDNA generation, and is presumably released from (+)DNA by host nuclear DNA repair machinery. This Hepatitis B virus genotype D (isolate Germany/1-91/1991) (HBV-D) protein is Protein P.